A 113-amino-acid polypeptide reads, in one-letter code: Small ribosomal subunit protein bS6 (113 aa).

Belongs to the bacterial ribosomal protein bS6 family.

In terms of biological role, binds together with bS18 to 16S ribosomal RNA. The sequence is that of Small ribosomal subunit protein bS6 (rpsF) from Synechocystis sp. (strain ATCC 27184 / PCC 6803 / Kazusa).